The sequence spans 882 residues: Homeobox-leucine zipper protein ROC3 (882 aa).

The tract at residues 104-144 (DVDDDHKPQHSGHDQPPDAAQPSGAAGGNAKKKRYHRHTAH) is disordered. A compositionally biased stretch (basic and acidic residues) spans 107-119 (DDHKPQHSGHDQP). Over residues 133-143 (AKKKRYHRHTA) the composition is skewed to basic residues. Positions 134–193 (KKKRYHRHTAHQIQQMEALFKECPHPDDKQRLKLSQELGLKPRQVKFWFQNRRTQMKAQQ) form a DNA-binding region, homeobox. A coiled-coil region spans residues 200 to 263 (ILRAENENLK…LDRLACIATR (64 aa)). In terms of domain architecture, START spans 340–584 (QEQDKQLVVD…LQRQCERLAS (245 aa)). Residues 782–816 (AAAPTISSSTTTTTGNGNGETSSTPPRNSSSNNNN) are compositionally biased toward low complexity. A disordered region spans residues 782–820 (AAAPTISSSTTTTTGNGNGETSSTPPRNSSSNNNNADEL).

It belongs to the HD-ZIP homeobox family. Class IV subfamily.

It localises to the nucleus. Its function is as follows. Probable transcription factor. This Oryza sativa subsp. japonica (Rice) protein is Homeobox-leucine zipper protein ROC3 (ROC3).